Reading from the N-terminus, the 311-residue chain is MDRLQRLMMSQRSNMIGAAATEMPLDDTKETVYISSLALLKMLKHSRAGVPMEVMGLMLGDFVDEYTVNVVDVFAMPQSGTGVSVEAVDDVFQAKMMDMLKQTGRDQMVVGWYHSHPGFGCWLSSVDVDTQRSFEQLNSRAVAVVVDPIQSVKGKVVIDAFRLISPATVVRNQEPRQTTSNVGLLNKPNIQSLIHGLNRHYYSLNIDYHKTSAELNMLMNLHKEQWQSGLKMHDYKEKERINLEATKKSVRIAEQYTKRIEEEKELTEDELKTRYVGKQDPKKHLSETAERVLEENIVSVLTAGVNSVAIK.

The MPN domain occupies 32-167 (VYISSLALLK…IDAFRLISPA (136 aa)). Zn(2+)-binding residues include His114, His116, and Asp127. The JAMM motif motif lies at 114-127 (HSHPGFGCWLSSVD).

This sequence belongs to the peptidase M67A family.

Functionally, acts as a regulatory subunit of the 26 proteasome which is involved in the ATP-dependent degradation of ubiquitinated proteins. The chain is 26S proteasome regulatory subunit RPN11 (RPN11) from Eremothecium gossypii (strain ATCC 10895 / CBS 109.51 / FGSC 9923 / NRRL Y-1056) (Yeast).